The sequence spans 130 residues: Small ribosomal subunit protein uS8 (130 aa).

Belongs to the universal ribosomal protein uS8 family. As to quaternary structure, part of the 30S ribosomal subunit. Contacts proteins S5 and S12.

Functionally, one of the primary rRNA binding proteins, it binds directly to 16S rRNA central domain where it helps coordinate assembly of the platform of the 30S subunit. This chain is Small ribosomal subunit protein uS8, found in Tolumonas auensis (strain DSM 9187 / NBRC 110442 / TA 4).